Consider the following 178-residue polypeptide: Probable major fimbrial subunit LpfA (178 aa).

The N-terminal stretch at 1–24 (MEFFMKKVVFALTALALTSGTVFA) is a signal peptide.

This sequence belongs to the fimbrial protein family.

Its subcellular location is the fimbrium. Functionally, part of the lpfABCC'DE fimbrial operon. LP fimbriae may participate in the interaction with eukaryotic cells by assisting in microcolony formation. This chain is Probable major fimbrial subunit LpfA (lpfA), found in Escherichia coli O157:H7.